We begin with the raw amino-acid sequence, 741 residues long: Lamin-B receptor (741 aa).

The interval arginine 29–proline 126 is disordered. Composition is skewed to low complexity over residues threonine 57–alanine 84 and proline 109–proline 126. Serine 111 carries the post-translational modification Phosphoserine. The residue at position 135 (threonine 135) is a Phosphothreonine. Serine 144 carries the post-translational modification Phosphoserine. Polar residues predominate over residues threonine 160–arginine 184. A disordered region spans residues threonine 160 to threonine 194. The span at threonine 185–threonine 194 shows a compositional bias: low complexity. 2 positions are modified to phosphoserine: serine 223 and serine 225. A compositionally biased stretch (polar residues) spans leucine 231–glutamate 240. The tract at residues leucine 231–leucine 277 is disordered. Residues threonine 234 and threonine 237 each carry the phosphothreonine modification. 5 positions are modified to phosphoserine: serine 243, serine 246, serine 248, serine 250, and serine 263. At threonine 266 the chain carries Phosphothreonine. The span at glycine 267–leucine 277 shows a compositional bias: acidic residues. Serine 284 carries the post-translational modification Phosphoserine. Residue threonine 288 is modified to Phosphothreonine. Serine 291 carries the phosphoserine modification. The residue at position 293 (threonine 293) is a Phosphothreonine. At serine 298 the chain carries Phosphoserine. 8 helical membrane passes run phenylalanine 308–leucine 328, valine 363–glycine 383, leucine 402–valine 422, phenylalanine 429–aspartate 449, leucine 497–proline 517, proline 543–glutamate 563, tyrosine 577–phenylalanine 599, and valine 604–leucine 624. A phosphoserine mark is found at serine 640 and serine 642. A helical transmembrane segment spans residues methionine 687 to leucine 707.

This sequence belongs to the ERG4/ERG24 family. As to quaternary structure, interacts directly with LAM.

It localises to the nucleus inner membrane. Functionally, anchors the lamina and the heterochromatin to the inner nuclear membrane. The protein is Lamin-B receptor of Drosophila melanogaster (Fruit fly).